We begin with the raw amino-acid sequence, 202 residues long: Adenylyl-sulfate kinase (202 aa).

Residue glycine 35–serine 42 participates in ATP binding. Catalysis depends on serine 109, which acts as the Phosphoserine intermediate.

It belongs to the APS kinase family.

It catalyses the reaction adenosine 5'-phosphosulfate + ATP = 3'-phosphoadenylyl sulfate + ADP + H(+). The protein operates within sulfur metabolism; hydrogen sulfide biosynthesis; sulfite from sulfate: step 2/3. In terms of biological role, catalyzes the synthesis of activated sulfate. This Bacteroides fragilis (strain ATCC 25285 / DSM 2151 / CCUG 4856 / JCM 11019 / LMG 10263 / NCTC 9343 / Onslow / VPI 2553 / EN-2) protein is Adenylyl-sulfate kinase.